The primary structure comprises 183 residues: Hypoxanthine/guanine phosphoribosyltransferase (183 aa).

The protein belongs to the purine/pyrimidine phosphoribosyltransferase family. Archaeal HPRT subfamily. Homodimer.

It is found in the cytoplasm. It carries out the reaction IMP + diphosphate = hypoxanthine + 5-phospho-alpha-D-ribose 1-diphosphate. The enzyme catalyses GMP + diphosphate = guanine + 5-phospho-alpha-D-ribose 1-diphosphate. It functions in the pathway purine metabolism; IMP biosynthesis via salvage pathway; IMP from hypoxanthine: step 1/1. In terms of biological role, catalyzes a salvage reaction resulting in the formation of IMP that is energically less costly than de novo synthesis. The sequence is that of Hypoxanthine/guanine phosphoribosyltransferase from Methanocaldococcus jannaschii (strain ATCC 43067 / DSM 2661 / JAL-1 / JCM 10045 / NBRC 100440) (Methanococcus jannaschii).